The following is a 101-amino-acid chain: Protamine-3 (101 aa).

The segment at 1 to 101 (MGSRCAKLST…PSPEPKQTHS (101 aa)) is disordered. Acidic residues predominate over residues 45–67 (EGEEEEEDEEEEEEEEEEEEEEQ). Serine 93 carries the post-translational modification Phosphoserine.

It belongs to the protamine P3 family. Testis.

It localises to the nucleus. The protein resides in the chromosome. In terms of biological role, protamines substitute for histones in the chromatin of sperm during the haploid phase of spermatogenesis. They compact sperm DNA into a highly condensed, stable and inactive complex. This chain is Protamine-3 (Prm3), found in Mus musculus (Mouse).